A 69-amino-acid chain; its full sequence is ATP synthase subunits region ORF 1 (69 aa).

In Fuscovulum blasticum (Rhodobacter blasticus), this protein is ATP synthase subunits region ORF 1.